Here is a 583-residue protein sequence, read N- to C-terminus: Aspartate--tRNA ligase (583 aa).

Residue Glu-174 participates in L-aspartate binding. Residues 198–201 (QITK) form an aspartate region. An L-aspartate-binding site is contributed by Arg-220. Residues 220-222 (RDE) and Gln-229 contribute to the ATP site. His-443 is a binding site for L-aspartate. ATP is bound at residue Glu-477. Arg-484 contributes to the L-aspartate binding site. ATP is bound at residue 529 to 532 (GLDR).

The protein belongs to the class-II aminoacyl-tRNA synthetase family. Type 1 subfamily. In terms of assembly, homodimer.

It is found in the cytoplasm. It carries out the reaction tRNA(Asp) + L-aspartate + ATP = L-aspartyl-tRNA(Asp) + AMP + diphosphate. In terms of biological role, catalyzes the attachment of L-aspartate to tRNA(Asp) in a two-step reaction: L-aspartate is first activated by ATP to form Asp-AMP and then transferred to the acceptor end of tRNA(Asp). The sequence is that of Aspartate--tRNA ligase from Streptococcus agalactiae serotype Ia (strain ATCC 27591 / A909 / CDC SS700).